The chain runs to 146 residues: Large ribosomal subunit protein uL16c (146 aa).

The protein belongs to the universal ribosomal protein uL16 family. In terms of assembly, part of the 50S ribosomal subunit.

Its subcellular location is the plastid. The protein localises to the chloroplast. This Angiopteris evecta (Mule's foot fern) protein is Large ribosomal subunit protein uL16c.